The following is a 510-amino-acid chain: 1,3-beta-glucanosyltransferase gas5 (510 aa).

The signal sequence occupies residues 1–22; it reads MNFLHFLTTSLLLLGGSRLALA. Cysteine 70 and cysteine 99 form a disulfide bridge. Position 88 (tyrosine 88) interacts with (1,3-beta-D-glucosyl)n. A glycan (N-linked (GlcNAc...) asparagine) is linked at asparagine 147. (1,3-beta-D-glucosyl)n-binding residues include asparagine 158, glutamate 159, aspartate 200, and arginine 205. Residue glutamate 159 is the Proton donor of the active site. Disulfide bonds link cysteine 214–cysteine 353 and cysteine 232–cysteine 264. N-linked (GlcNAc...) asparagine glycans are attached at residues asparagine 216 and asparagine 252. Glutamate 261 acts as the Nucleophile in catalysis. Tyrosine 300 contacts (1,3-beta-D-glucosyl)n. Asparagine 318, asparagine 337, and asparagine 397 each carry an N-linked (GlcNAc...) asparagine glycan. The segment at 424-456 is disordered; it reads QSSTSGSSSGSSSASTTASSSSVSSGSSISSGS. The GPI-anchor amidated serine moiety is linked to residue serine 485. A propeptide spans 486–510 (removed in mature form); the sequence is SASTFNLSRFYVFAGILAISGLVFA. The N-linked (GlcNAc...) asparagine glycan is linked to asparagine 491.

Belongs to the glycosyl hydrolase 72 family. Post-translationally, the GPI-anchor is attached to the protein in the endoplasmic reticulum and serves to target the protein to the cell surface. There, the glucosamine-inositol phospholipid moiety is cleaved off and the GPI-modified mannoprotein is covalently attached via its lipidless GPI glycan remnant to the 1,6-beta-glucan of the outer cell wall layer.

It localises to the secreted. The protein localises to the cell wall. Its subcellular location is the membrane. Its function is as follows. Splits internally a 1,3-beta-glucan molecule and transfers the newly generated reducing end (the donor) to the non-reducing end of another 1,3-beta-glucan molecule (the acceptor) forming a 1,3-beta linkage, resulting in the elongation of 1,3-beta-glucan chains in the cell wall. In Schizosaccharomyces pombe (strain 972 / ATCC 24843) (Fission yeast), this protein is 1,3-beta-glucanosyltransferase gas5 (gas5).